We begin with the raw amino-acid sequence, 382 residues long: Kelch domain-containing protein 3 (382 aa).

Kelch repeat units follow at residues 25–77, 88–138, 139–189, 191–249, and 251–301; these read RVYS…PYMR, TVFL…VLGK, TMYI…TMLG, HMYV…GYNG, and LYIF…IVGD.

As to quaternary structure, component of a CRL2(KLHDC3) complex, also named ECS(KLHDC3) complex, composed of CUL2, Elongin BC (ELOB and ELOC), RBX1 and substrate-specific adapter KLHDC3. May form oligomers as a KLHDC3-ELOB-ELOC complex; this interaction is likely autoinhibitory for the E3 ligase complex.

It is found in the cytoplasm. It functions in the pathway protein modification; protein ubiquitination. Its function is as follows. Substrate-recognition component of a Cul2-RING (CRL2) E3 ubiquitin-protein ligase complex of the DesCEND (destruction via C-end degrons) pathway, which recognizes a C-degron located at the extreme C terminus of target proteins, leading to their ubiquitination and degradation. The C-degron recognized by the DesCEND pathway is usually a motif of less than ten residues and can be present in full-length proteins, truncated proteins or proteolytically cleaved forms. The CRL2(KLHDC3) complex specifically recognizes proteins with a glycine (Gly) at the C-terminus, leading to their ubiquitination and degradation: recognizes the C-terminal -Arg-(Xaa)n-Arg-Gly, -Arg-(Xaa)n-Lys-Gly, and -Arg-(Xaa)n-Gln-Gly degrons. The CRL2(KLHDC3) complex mediates ubiquitination and degradation of truncated SELENOV and SEPHS2 selenoproteins produced by failed UGA/Sec decoding, which end with a glycine. May be involved in meiotic recombination process. This chain is Kelch domain-containing protein 3, found in Bos taurus (Bovine).